Here is a 466-residue protein sequence, read N- to C-terminus: Trigger factor (466 aa).

In terms of domain architecture, PPIase FKBP-type spans 166–245 (GDFAQIDLVA…LNAVKERELP (80 aa)). 2 disordered regions span residues 313-332 (LEQE…TESS) and 424-466 (LPDD…AADK). The span at 426 to 444 (DDGEAVDEDATPEDTDAPA) shows a compositional bias: acidic residues. The span at 453 to 466 (PKKKAAAKKKAADK) shows a compositional bias: basic residues.

The protein belongs to the FKBP-type PPIase family. Tig subfamily.

It localises to the cytoplasm. It catalyses the reaction [protein]-peptidylproline (omega=180) = [protein]-peptidylproline (omega=0). Its function is as follows. Involved in protein export. Acts as a chaperone by maintaining the newly synthesized protein in an open conformation. Functions as a peptidyl-prolyl cis-trans isomerase. The protein is Trigger factor of Leifsonia xyli subsp. xyli (strain CTCB07).